We begin with the raw amino-acid sequence, 76 residues long: Small nuclear ribonucleoprotein G (76 aa).

In terms of domain architecture, Sm spans 4-76 (AHPPELKKFM…IIMLEALERV (73 aa)).

Belongs to the snRNP Sm proteins family. In terms of assembly, core component of the spliceosomal U1, U2, U4 and U5 small nuclear ribonucleoproteins (snRNPs), the building blocks of the spliceosome. Most spliceosomal snRNPs contain a common set of Sm proteins, SNRPB, SNRPD1, SNRPD2, SNRPD3, SNRPE, SNRPF and SNRPG that assemble in a heptameric protein ring on the Sm site of the small nuclear RNA to form the core snRNP. Component of the U1 snRNP. The U1 snRNP is composed of the U1 snRNA and the 7 core Sm proteins SNRPB, SNRPD1, SNRPD2, SNRPD3, SNRPE, SNRPF and SNRPG, and at least three U1 snRNP-specific proteins SNRNP70/U1-70K, SNRPA/U1-A and SNRPC/U1-C. Component of the U4/U6-U5 tri-snRNP complex composed of the U4, U6 and U5 snRNAs and at least PRPF3, PRPF4, PRPF6, PRPF8, PRPF31, SNRNP200, TXNL4A, SNRNP40, SNRPB, SNRPD1, SNRPD2, SNRPD3, SNRPE, SNRPF, SNRPG, DDX23, CD2BP2, PPIH, SNU13, EFTUD2, SART1 and USP39, plus LSM2, LSM3, LSM4, LSM5, LSM6, LSM7 and LSM8. Component of the U7 snRNP complex, or U7 Sm protein core complex, that is composed of the U7 snRNA and at least LSM10, LSM11, SNRPB, SNRPD3, SNRPE, SNRPF and SNRPG; the complex does not contain SNRPD1 and SNRPD2. Component of the minor spliceosome, which splices U12-type introns. Part of the SMN-Sm complex that contains SMN1, GEMIN2/SIP1, DDX20/GEMIN3, GEMIN4, GEMIN5, GEMIN6, GEMIN7, GEMIN8, STRAP/UNRIP and the Sm proteins SNRPB, SNRPD1, SNRPD2, SNRPD3, SNRPE, SNRPF and SNRPG; catalyzes core snRNPs assembly. Forms a 6S pICln-Sm complex composed of CLNS1A/pICln, SNRPD1, SNRPD2, SNRPE, SNRPF and SNRPG; ring-like structure where CLNS1A/pICln mimics additional Sm proteins and which is unable to assemble into the core snRNP. Interacts with GEMIN2 (via N-terminus); the interaction is direct. Interacts with SNRPE; the interaction is direct.

It localises to the cytoplasm. The protein resides in the cytosol. It is found in the nucleus. Plays a role in pre-mRNA splicing as a core component of the spliceosomal U1, U2, U4 and U5 small nuclear ribonucleoproteins (snRNPs), the building blocks of the spliceosome. Component of both the pre-catalytic spliceosome B complex and activated spliceosome C complexes. As a component of the minor spliceosome, involved in the splicing of U12-type introns in pre-mRNAs. As part of the U7 snRNP it is involved in histone 3'-end processing. The protein is Small nuclear ribonucleoprotein G (SNRPG) of Bos taurus (Bovine).